Here is a 425-residue protein sequence, read N- to C-terminus: Glutamate-1-semialdehyde 2,1-aminomutase (425 aa).

The residue at position 265 (Lys-265) is an N6-(pyridoxal phosphate)lysine.

It belongs to the class-III pyridoxal-phosphate-dependent aminotransferase family. HemL subfamily. Homodimer. Requires pyridoxal 5'-phosphate as cofactor.

The protein resides in the cytoplasm. It carries out the reaction (S)-4-amino-5-oxopentanoate = 5-aminolevulinate. It participates in porphyrin-containing compound metabolism; protoporphyrin-IX biosynthesis; 5-aminolevulinate from L-glutamyl-tRNA(Glu): step 2/2. This chain is Glutamate-1-semialdehyde 2,1-aminomutase, found in Chromobacterium violaceum (strain ATCC 12472 / DSM 30191 / JCM 1249 / CCUG 213 / NBRC 12614 / NCIMB 9131 / NCTC 9757 / MK).